A 117-amino-acid chain; its full sequence is Large ribosomal subunit protein uL24 (117 aa).

It belongs to the universal ribosomal protein uL24 family. In terms of assembly, part of the 50S ribosomal subunit.

In terms of biological role, one of two assembly initiator proteins, it binds directly to the 5'-end of the 23S rRNA, where it nucleates assembly of the 50S subunit. Functionally, located at the polypeptide exit tunnel on the outside of the subunit. The protein is Large ribosomal subunit protein uL24 of Methanothermobacter thermautotrophicus (strain ATCC 29096 / DSM 1053 / JCM 10044 / NBRC 100330 / Delta H) (Methanobacterium thermoautotrophicum).